The chain runs to 199 residues: Recombination protein RecR (199 aa).

The C4-type zinc-finger motif lies at 58–73 (CRICYNITDTEVCNIC). In terms of domain architecture, Toprim spans 81–176 (SLICVVSHPM…KVTRIAHGVP (96 aa)).

It belongs to the RecR family.

May play a role in DNA repair. It seems to be involved in an RecBC-independent recombinational process of DNA repair. It may act with RecF and RecO. This is Recombination protein RecR from Thermoanaerobacter pseudethanolicus (strain ATCC 33223 / 39E) (Clostridium thermohydrosulfuricum).